We begin with the raw amino-acid sequence, 333 residues long: Acetyl-coenzyme A carboxylase carboxyl transferase subunit alpha (333 aa).

The CoA carboxyltransferase C-terminal domain maps to 48–308 (ALEVKVETLR…KEMLIEELRI (261 aa)).

It belongs to the AccA family. Acetyl-CoA carboxylase is a heterohexamer composed of biotin carboxyl carrier protein (AccB), biotin carboxylase (AccC) and two subunits each of ACCase subunit alpha (AccA) and ACCase subunit beta (AccD).

The protein resides in the cytoplasm. The catalysed reaction is N(6)-carboxybiotinyl-L-lysyl-[protein] + acetyl-CoA = N(6)-biotinyl-L-lysyl-[protein] + malonyl-CoA. It functions in the pathway lipid metabolism; malonyl-CoA biosynthesis; malonyl-CoA from acetyl-CoA: step 1/1. Functionally, component of the acetyl coenzyme A carboxylase (ACC) complex. First, biotin carboxylase catalyzes the carboxylation of biotin on its carrier protein (BCCP) and then the CO(2) group is transferred by the carboxyltransferase to acetyl-CoA to form malonyl-CoA. This Chlorobium phaeobacteroides (strain DSM 266 / SMG 266 / 2430) protein is Acetyl-coenzyme A carboxylase carboxyl transferase subunit alpha.